Consider the following 326-residue polypeptide: Tetraketide alpha-pyrone reductase 1 (326 aa).

Residues 8-32, lysine 44, and tyrosine 162 contribute to the NADP(+) site; that span reads VCVT…GYEV.

Belongs to the NAD(P)-dependent epimerase/dehydratase family. Dihydroflavonol-4-reductase subfamily. As to quaternary structure, interacts with 4CLL1/ACOS5, PKSA and PKSB. In terms of tissue distribution, specifically expressed in anther tapetal cells during microspores development.

It localises to the cytoplasm. It is found in the nucleus. The protein localises to the endoplasmic reticulum. Involved in the biosynthesis of hydroxylated tetraketide compounds that serve as sporopollenin precursors (the main constituents of exine). Is essential for pollen wall development. Acts on tetraketide alpha-pyrones and reduces the carbonyl function on the tetraketide alkyl chain to a secondary alcohol function. The polypeptide is Tetraketide alpha-pyrone reductase 1 (TKPR1) (Arabidopsis thaliana (Mouse-ear cress)).